A 157-amino-acid chain; its full sequence is NudC domain-containing protein 2 (157 aa).

The residue at position 2 (S2) is an N-acetylserine. Residues 14–104 form the CS domain; sequence CATPWGQWYQ…DAANCWTSLL (91 aa). The tract at residues 134–157 is disordered; sequence FDFSGAEISGNYTKGGPDFSNLEK. A Phosphoserine modification is found at S142. Y145 is subject to Phosphotyrosine.

In terms of assembly, interacts with LIS1.

The protein localises to the chromosome. It localises to the centromere. The protein resides in the kinetochore. Its subcellular location is the cytoplasm. It is found in the cytoskeleton. The protein localises to the microtubule organizing center. It localises to the centrosome. The protein resides in the spindle pole. May regulate the LIS1/dynein pathway by stabilizing LIS1 with Hsp90 chaperone. In Rattus norvegicus (Rat), this protein is NudC domain-containing protein 2 (Nudcd2).